The following is a 414-amino-acid chain: Signal recognition particle receptor FtsY (414 aa).

GTP contacts are provided by residues 216 to 223, 298 to 302, and 362 to 365; these read GVNGVGKT, DTAGR, and TKLD.

It belongs to the GTP-binding SRP family. FtsY subfamily. Part of the signal recognition particle protein translocation system, which is composed of SRP and FtsY. SRP is a ribonucleoprotein composed of Ffh and a 4.5S RNA molecule.

The protein localises to the cell inner membrane. The protein resides in the cytoplasm. The catalysed reaction is GTP + H2O = GDP + phosphate + H(+). Involved in targeting and insertion of nascent membrane proteins into the cytoplasmic membrane. Acts as a receptor for the complex formed by the signal recognition particle (SRP) and the ribosome-nascent chain (RNC). Interaction with SRP-RNC leads to the transfer of the RNC complex to the Sec translocase for insertion into the membrane, the hydrolysis of GTP by both Ffh and FtsY, and the dissociation of the SRP-FtsY complex into the individual components. The chain is Signal recognition particle receptor FtsY from Haemophilus influenzae (strain ATCC 51907 / DSM 11121 / KW20 / Rd).